The sequence spans 248 residues: Conoporin-Cn1 (248 aa).

The signal sequence occupies residues 1–23; sequence MGVQFPALKTMVTVFLLLMGNMS. The interval 45-64 is N-terminal region; sequence TPGSSLYGVALKDLADTSYN. Residues glycine 120, serine 138, proline 140, tyrosine 167, and tyrosine 171 each contribute to the phosphocholine site.

The protein belongs to the actinoporin family. Conoidea subfamily. As to quaternary structure, octamer or nonamer in membranes. Monomer in the soluble state. 9 isoforms are detected in the injectable venom, mainly corresponding to different oxidative states. In terms of tissue distribution, expressed by the venom duct.

It is found in the secreted. Its subcellular location is the nematocyst. The protein resides in the target cell membrane. Pore-forming protein that forms pores of around 1 nm and causes cardiac stimulation and cytolysis. This is Conoporin-Cn1 from Conus consors (Singed cone).